The following is a 247-amino-acid chain: Geranylgeranylglyceryl phosphate synthase (247 aa).

Positions 23 and 52 each coordinate Mg(2+). Residues 171 to 177, 203 to 204, and 225 to 226 contribute to the sn-glycerol 1-phosphate site; these read YLEAGSG, GG, and GT.

Belongs to the GGGP/HepGP synthase family. Group II subfamily. Mg(2+) is required as a cofactor.

The protein resides in the cytoplasm. The catalysed reaction is sn-glycerol 1-phosphate + (2E,6E,10E)-geranylgeranyl diphosphate = sn-3-O-(geranylgeranyl)glycerol 1-phosphate + diphosphate. Its pathway is membrane lipid metabolism; glycerophospholipid metabolism. Prenyltransferase that catalyzes the transfer of the geranylgeranyl moiety of geranylgeranyl diphosphate (GGPP) to the C3 hydroxyl of sn-glycerol-1-phosphate (G1P). This reaction is the first ether-bond-formation step in the biosynthesis of archaeal membrane lipids. The protein is Geranylgeranylglyceryl phosphate synthase of Methanosarcina acetivorans (strain ATCC 35395 / DSM 2834 / JCM 12185 / C2A).